The following is a 516-amino-acid chain: Bifunctional purine biosynthesis protein PurH (516 aa).

An MGS-like domain is found at 1–149 (MSERQPIRRA…KNHANVAVLT (149 aa)).

It belongs to the PurH family.

The catalysed reaction is (6R)-10-formyltetrahydrofolate + 5-amino-1-(5-phospho-beta-D-ribosyl)imidazole-4-carboxamide = 5-formamido-1-(5-phospho-D-ribosyl)imidazole-4-carboxamide + (6S)-5,6,7,8-tetrahydrofolate. It catalyses the reaction IMP + H2O = 5-formamido-1-(5-phospho-D-ribosyl)imidazole-4-carboxamide. It participates in purine metabolism; IMP biosynthesis via de novo pathway; 5-formamido-1-(5-phospho-D-ribosyl)imidazole-4-carboxamide from 5-amino-1-(5-phospho-D-ribosyl)imidazole-4-carboxamide (10-formyl THF route): step 1/1. It functions in the pathway purine metabolism; IMP biosynthesis via de novo pathway; IMP from 5-formamido-1-(5-phospho-D-ribosyl)imidazole-4-carboxamide: step 1/1. The sequence is that of Bifunctional purine biosynthesis protein PurH from Cutibacterium acnes (strain DSM 16379 / KPA171202) (Propionibacterium acnes).